A 116-amino-acid polypeptide reads, in one-letter code: Dynein light chain Tctex-type 3 (116 aa).

A 3'-nitrotyrosine modification is found at Tyr4.

This sequence belongs to the dynein light chain Tctex-type family. Homodimer. The cytoplasmic dynein 1 complex consists of two catalytic heavy chains (HCs) and a number of non-catalytic subunits presented by intermediate chains (ICs), light intermediate chains (LICs) and light chains (LCs); the composition seems to vary in respect to the IC, LIC and LC composition. The heavy chain homodimer serves as a scaffold for the probable homodimeric assembly of the respective non-catalytic subunits. The ICs and LICs bind directly to the HC dimer and the LCs assemble on the IC dimer. DYNLT1 and DYNLT3 compete for association with dynein IC (DYNC1I1 or DYNC1I2). Self-associates. Interacts with DYNC1I1 and DYNC1I2. Interacts with BUB3. Interacts with SATB1 in nucleus to form complex with matrix attachment regions (MARs) of DNA.

It localises to the nucleus. The protein localises to the cytoplasm. It is found in the cytoskeleton. The protein resides in the chromosome. Its subcellular location is the centromere. It localises to the kinetochore. Its function is as follows. Acts as one of several non-catalytic accessory components of the cytoplasmic dynein 1 complex that are thought to be involved in linking dynein to cargos and to adapter proteins that regulate dynein function. Cytoplasmic dynein 1 acts as a motor for the intracellular retrograde motility of vesicles and organelles along microtubules. Probably binds BUB3 as part of transport cargo. Required for the efficient progression through mitosis. This Ovis aries (Sheep) protein is Dynein light chain Tctex-type 3 (DYNLT3).